A 570-amino-acid chain; its full sequence is Eukaryotic translation initiation factor 2A (570 aa).

WD repeat units follow at residues 274 to 316 and 318 to 358; these read EKKG…FDTI and GPRN…EIIS. A disordered region spans residues 468-526; sequence PPHLRKPLGGGGSAGPPSAAAPTPGNQNQRPAQPRANGNGNAPQPFRPQQSEQERKAFQ. Low complexity predominate over residues 482 to 492; it reads GPPSAAAPTPG. The span at 493–518 shows a compositional bias: polar residues; that stretch reads NQNQRPAQPRANGNGNAPQPFRPQQS. Residues 519–541 are a coiled coil; that stretch reads EQERKAFQLKKKVEEIKVLKQRV.

Belongs to the WD repeat EIF2A family.

Functionally, functions in the early steps of protein synthesis of a small number of specific mRNAs. Acts by directing the binding of methionyl-tRNAi to 40S ribosomal subunits. In contrast to the eIF-2 complex, it binds methionyl-tRNAi to 40S subunits in a codon-dependent manner, whereas the eIF-2 complex binds methionyl-tRNAi to 40S subunits in a GTP-dependent manner. This is Eukaryotic translation initiation factor 2A from Caenorhabditis elegans.